A 157-amino-acid polypeptide reads, in one-letter code: uncharacterized protein (157 aa).

This is an uncharacterized protein from Lepidoptera (butterflies and moths).